Reading from the N-terminus, the 483-residue chain is Cysteine--tRNA ligase (483 aa).

Cys28 contacts Zn(2+). The 'HIGH' region signature appears at 30–40 (MTVYDYCHLGH). The Zn(2+) site is built by Cys212, His237, and Glu241. The 'KMSKS' region motif lies at 269–273 (KMSKS). Lys272 is a binding site for ATP.

It belongs to the class-I aminoacyl-tRNA synthetase family. Monomer. Zn(2+) serves as cofactor.

It is found in the cytoplasm. The catalysed reaction is tRNA(Cys) + L-cysteine + ATP = L-cysteinyl-tRNA(Cys) + AMP + diphosphate. The polypeptide is Cysteine--tRNA ligase (Bordetella avium (strain 197N)).